The chain runs to 92 residues: Small ribosomal subunit protein uS19 (92 aa).

Belongs to the universal ribosomal protein uS19 family.

Its function is as follows. Protein S19 forms a complex with S13 that binds strongly to the 16S ribosomal RNA. The chain is Small ribosomal subunit protein uS19 from Photorhabdus laumondii subsp. laumondii (strain DSM 15139 / CIP 105565 / TT01) (Photorhabdus luminescens subsp. laumondii).